A 29-amino-acid chain; its full sequence is 28 kDa protein (29 aa).

This chain is 28 kDa protein, found in Tritrichomonas foetus (Trichomonas foetus).